Reading from the N-terminus, the 199-residue chain is Putative acetyltransferase SAV2555 (199 aa).

It belongs to the transferase hexapeptide repeat family.

The chain is Putative acetyltransferase SAV2555 from Staphylococcus aureus (strain Mu50 / ATCC 700699).